Consider the following 208-residue polypeptide: Uracil phosphoribosyltransferase (208 aa).

5-phospho-alpha-D-ribose 1-diphosphate is bound by residues R78, R103, and 130–138; that span reads DPMLATGGS. Uracil-binding positions include I193 and 198–200; that span reads GDA. Residue D199 coordinates 5-phospho-alpha-D-ribose 1-diphosphate.

The protein belongs to the UPRTase family. The cofactor is Mg(2+).

It carries out the reaction UMP + diphosphate = 5-phospho-alpha-D-ribose 1-diphosphate + uracil. It participates in pyrimidine metabolism; UMP biosynthesis via salvage pathway; UMP from uracil: step 1/1. With respect to regulation, allosterically activated by GTP. Its function is as follows. Catalyzes the conversion of uracil and 5-phospho-alpha-D-ribose 1-diphosphate (PRPP) to UMP and diphosphate. The chain is Uracil phosphoribosyltransferase from Shewanella woodyi (strain ATCC 51908 / MS32).